Consider the following 631-residue polypeptide: Phosphomethylpyrimidine synthase (631 aa).

Residues asparagine 239, methionine 268, tyrosine 297, histidine 333, 353-355 (SRG), 394-397 (DGLR), and glutamate 433 contribute to the substrate site. Histidine 437 contributes to the Zn(2+) binding site. Tyrosine 460 lines the substrate pocket. Residue histidine 501 participates in Zn(2+) binding. [4Fe-4S] cluster-binding residues include cysteine 581, cysteine 584, and cysteine 589.

Belongs to the ThiC family. Homodimer. The cofactor is [4Fe-4S] cluster.

It carries out the reaction 5-amino-1-(5-phospho-beta-D-ribosyl)imidazole + S-adenosyl-L-methionine = 4-amino-2-methyl-5-(phosphooxymethyl)pyrimidine + CO + 5'-deoxyadenosine + formate + L-methionine + 3 H(+). Its pathway is cofactor biosynthesis; thiamine diphosphate biosynthesis. Functionally, catalyzes the synthesis of the hydroxymethylpyrimidine phosphate (HMP-P) moiety of thiamine from aminoimidazole ribotide (AIR) in a radical S-adenosyl-L-methionine (SAM)-dependent reaction. This chain is Phosphomethylpyrimidine synthase, found in Klebsiella pneumoniae (strain 342).